The sequence spans 133 residues: Phosphoribosyl-AMP cyclohydrolase (133 aa).

Residue Asp-82 coordinates Mg(2+). Residue Cys-83 coordinates Zn(2+). 2 residues coordinate Mg(2+): Asp-84 and Asp-86. Zn(2+) is bound by residues Cys-99 and Cys-106.

It belongs to the PRA-CH family. As to quaternary structure, homodimer. Requires Mg(2+) as cofactor. Zn(2+) serves as cofactor.

It is found in the cytoplasm. It carries out the reaction 1-(5-phospho-beta-D-ribosyl)-5'-AMP + H2O = 1-(5-phospho-beta-D-ribosyl)-5-[(5-phospho-beta-D-ribosylamino)methylideneamino]imidazole-4-carboxamide. The protein operates within amino-acid biosynthesis; L-histidine biosynthesis; L-histidine from 5-phospho-alpha-D-ribose 1-diphosphate: step 3/9. Catalyzes the hydrolysis of the adenine ring of phosphoribosyl-AMP. The protein is Phosphoribosyl-AMP cyclohydrolase of Rhodospirillum centenum (strain ATCC 51521 / SW).